A 351-amino-acid polypeptide reads, in one-letter code: NAD-dependent protein deacetylase SIR2rp1 (351 aa).

The Deacetylase sirtuin-type domain occupies 10–325 (HVVGEPTFEG…RSFAQALGFG (316 aa)). Residues 37 to 57 (GAGI…TGLY) and 122 to 125 (QNID) contribute to the NAD(+) site. Histidine 142 functions as the Proton acceptor in the catalytic mechanism. 4 residues coordinate Zn(2+): cysteine 150, cysteine 153, cysteine 174, and cysteine 177. NAD(+)-binding positions include 213-215 (GTS) and 238-240 (NLE). The segment at 260-284 (SSYRLSTGNGNGSKISSGDSSNSSS) is disordered. The span at 265-284 (STGNGNGSKISSGDSSNSSS) shows a compositional bias: low complexity. Residue cysteine 311 coordinates NAD(+).

The protein belongs to the sirtuin family. Class I subfamily. It depends on Zn(2+) as a cofactor.

It is found in the nucleus. It localises to the chromosome. The protein resides in the telomere. It carries out the reaction N(6)-acetyl-L-lysyl-[protein] + NAD(+) + H2O = 2''-O-acetyl-ADP-D-ribose + nicotinamide + L-lysyl-[protein]. Its function is as follows. NAD-dependent protein deacetylase, which is involved in repression of RNA polymerase I-mediated expression immediately adjacent to telomeres. It is however not involved in antigenic variation and subtelomeric variant surface glycoprotein (VSG) gene silencing. Plays a role in DNA damage response. Also has ADP-ribosylation activity in vitro. This chain is NAD-dependent protein deacetylase SIR2rp1 (SIR2rp1), found in Trypanosoma brucei brucei (strain 927/4 GUTat10.1).